The following is a 389-amino-acid chain: Mitochondrial tRNA-specific 2-thiouridylase 1 (389 aa).

ATP contacts are provided by residues 8 to 15 and Met-34; that span reads GVSGGVDS. The interaction with target base in tRNA stretch occupies residues 94 to 96; the sequence is NPD. Residue Cys-99 is the Nucleophile of the active site. A disulfide bridge connects residues Cys-99 and Cys-205. Gly-124 contributes to the ATP binding site. Positions 154–156 are interaction with tRNA; the sequence is KDQ. Cys-205 acts as the Cysteine persulfide intermediate in catalysis. The tract at residues 317-318 is interaction with tRNA; it reads QH.

It belongs to the MnmA/TRMU family.

Its subcellular location is the mitochondrion. The catalysed reaction is 5-taurinomethyluridine(34) in tRNA + S-sulfanyl-L-cysteinyl-[protein] + AH2 + ATP = 5-taurinomethyl-2-thiouridine(34) in tRNA + L-cysteinyl-[protein] + A + AMP + diphosphate + H(+). Catalyzes the 2-thiolation of uridine at the wobble position (U34) of mitochondrial tRNA(Lys), tRNA(Glu) and tRNA(Gln). Required for the formation of 5-taurinomethyl-2-thiouridine (tm5s2U) of mitochondrial tRNA(Lys), tRNA(Glu), and tRNA(Gln) at the wobble position. ATP is required to activate the C2 atom of the wobble base. The polypeptide is Mitochondrial tRNA-specific 2-thiouridylase 1 (Drosophila melanogaster (Fruit fly)).